Reading from the N-terminus, the 275-residue chain is Multivesicular body subunit 12A (275 aa).

Positions 5 to 145 (STPITGLAWI…GLVFWCRKGS (141 aa)) constitute an MABP domain. The short motif at 151–156 (PTPKPR) is the SH3-binding element. The UMA domain occupies 216-267 (IDGIPFTIHPMFENTINNSSVAASDFRDLHIKTLSEIESEYNYGFVVEKTAA).

The protein belongs to the MVB12 family. Component of the ESCRT-I complex (endosomal sorting complex required for transport I).

Its subcellular location is the cytoplasm. It localises to the endosome. It is found in the late endosome membrane. Its function is as follows. Component of the ESCRT-I complex, a regulator of vesicular trafficking process. Required for the sorting of endocytic ubiquitinated cargos into multivesicular bodies. The chain is Multivesicular body subunit 12A (mvb12a) from Xenopus laevis (African clawed frog).